The sequence spans 253 residues: Homeotic protein ultrabithorax (253 aa).

Residues 125–141 (GNTSNGSNAPNAANGQN) show a composition bias toward low complexity. A disordered region spans residues 125 to 193 (GNTSNGSNAP…GNGTAGGVPQ (69 aa)). The segment covering 176-189 (RGGGSAGGGNGTAG) has biased composition (gly residues). The Antp-type hexapeptide signature appears at 237–242 (FYPWMA).

The protein belongs to the Antp homeobox family.

The protein localises to the nucleus. Functionally, sequence-specific transcription factor which is part of a developmental regulatory system that provides cells with specific positional identities on the anterior-posterior axis. Binds the consensus region 5'-TTAAT[GT][GA]-3'. This homeotic protein controls development of the cells in the posterior thoracic and first abdominal segments. It activates the synthesis of the decapentaplegic (DPP) growth factor. The protein is Homeotic protein ultrabithorax (Ubx) of Drosophila funebris (Fruit fly).